A 299-amino-acid polypeptide reads, in one-letter code: Undecaprenyl-diphosphatase (299 aa).

Transmembrane regions (helical) follow at residues 10-32 (LFSLMILLAATSELLAACWRNLV), 63-83 (PGVSATAVIQLGSILAVIAYF), 112-132 (LAIAIGTMPILLAGMAIKLFW), 143-163 (LPSIAVVSIVMALLLALAESF), 178-198 (GFVVGLAQALALIPGVSRSGS), 213-233 (AARFCFLLGIPAITLAGLVEL), 243-263 (GGVLPLLVGIVSAAFVSWLAI), and 276-296 (WIFVVYRLLFGVLVLAWWLSG).

It belongs to the UppP family.

Its subcellular location is the cell inner membrane. The enzyme catalyses di-trans,octa-cis-undecaprenyl diphosphate + H2O = di-trans,octa-cis-undecaprenyl phosphate + phosphate + H(+). In terms of biological role, catalyzes the dephosphorylation of undecaprenyl diphosphate (UPP). Confers resistance to bacitracin. This is Undecaprenyl-diphosphatase from Prochlorococcus marinus (strain MIT 9313).